Here is a 3072-residue protein sequence, read N- to C-terminus: Eukaryotic translation initiation factor 2-alpha kinase PK4 (3072 aa).

The Cytoplasmic segment spans residues Met1–Glu106. A helical transmembrane segment spans residues Ile107–Leu127. Topologically, residues Leu128–Arg1643 are lumenal. The interval Lys383–Glu402 is disordered. The 10 X 7 AA tandem repeat of D-K-N-[GE]-L-D-[GD] stretch occupies residues Lys576–Asp610. Residues Gln970 to Ser1010 are disordered. Over residues Asp978 to Lys996 the composition is skewed to basic and acidic residues. Over residues Asn997 to Asn1009 the composition is skewed to low complexity. The helical transmembrane segment at Trp1644–Tyr1664 threads the bilayer. The Cytoplasmic portion of the chain corresponds to Arg1665–Lys3072. Disordered regions lie at residues Lys1737–Asn1766 and Lys1917–Lys1937. Low complexity predominate over residues Asn1738 to Asn1766. Over residues Asn1928–Lys1937 the composition is skewed to basic and acidic residues. ATP-binding positions include Ile2152 to Val2160 and Lys2177. 3 disordered regions span residues Phe2316–Asp2402, Arg2479–Asp2558, and Glu2691–Ile2749. Over residues Lys2326–His2335 the composition is skewed to basic and acidic residues. Over residues His2362–Ile2384 the composition is skewed to basic residues. Repeat copies occupy residues Asp2483 to Gly2489, Asp2490 to Gly2496, Asp2497 to Gly2503, Asp2504 to Gly2510, Asp2511 to Gly2517, Asp2518 to Gly2524, Asp2525 to Gly2531, Asp2532 to Gly2538, Asp2539 to Gly2545, and Asp2546 to Asp2552. The Protein kinase domain occupies Thr2627 to Leu2998. Over residues Asn2692–Asn2702 the composition is skewed to acidic residues. Asp2835 acts as the Proton acceptor in catalysis. Position 2902 is a phosphothreonine (Thr2902).

It belongs to the protein kinase superfamily. Ser/Thr protein kinase family. GCN2 subfamily. In terms of assembly, may form oligomers in response to stress; oligomerization may result in catalytic activity. Interacts with BIP; the interaction is disrupted in response to stress. Post-translationally, auto-phosphorylated.

The protein resides in the endoplasmic reticulum membrane. The enzyme catalyses L-seryl-[protein] + ATP = O-phospho-L-seryl-[protein] + ADP + H(+). It catalyses the reaction L-threonyl-[protein] + ATP = O-phospho-L-threonyl-[protein] + ADP + H(+). Dissociation from BIP and oligomerization, may results autophosphorylation and kinase activity induction. Functionally, during the asexual blood stage, phosphorylates translation factor eIF2alpha in late schizonts resulting in protein translation inhibition. Plays a role in trophozoite differentiation into schizonts. This Plasmodium falciparum (isolate 3D7) protein is Eukaryotic translation initiation factor 2-alpha kinase PK4.